Reading from the N-terminus, the 361-residue chain is RNA 3'-terminal phosphate cyclase (361 aa).

ATP-binding residues include Q105, P132, Y295, D298, Q299, and H321. H321 serves as the catalytic Tele-AMP-histidine intermediate.

Belongs to the RNA 3'-terminal cyclase family. Type 1 subfamily.

It localises to the nucleus. The protein resides in the nucleoplasm. It catalyses the reaction a 3'-end 3'-phospho-ribonucleotide-RNA + ATP = a 3'-end 2',3'-cyclophospho-ribonucleotide-RNA + AMP + diphosphate. Its function is as follows. Catalyzes the conversion of 3'-phosphate to a 2',3'-cyclic phosphodiester at the end of RNA. The mechanism of action of the enzyme occurs in 3 steps: (A) adenylation of the enzyme by ATP; (B) transfer of adenylate to an RNA-N3'P to produce RNA-N3'PP5'A; (C) and attack of the adjacent 2'-hydroxyl on the 3'-phosphorus in the diester linkage to produce the cyclic end product. Likely functions in some aspects of cellular RNA processing. Function plays an important role in a RNA repair and splicing pathway which controls axon regeneration in response to peripheral (PNS) and central nervous system (CNS) injury. In response to axotomy, negatively regulates splicing of Xbp1 which in turn activates downstream effectors which inhibit axon regeneration, including down-regulating the microtubule regulators ringer and futsch. In Drosophila melanogaster (Fruit fly), this protein is RNA 3'-terminal phosphate cyclase.